Reading from the N-terminus, the 537-residue chain is Zinc finger protein 835 (537 aa).

Residues 12–109 (AELEGNWKHE…RERGGGPKKP (98 aa)) are disordered. Residues 63 to 77 (TISSPAATQASVPDD) are compositionally biased toward polar residues. The span at 89-104 (SPKERHPDSRQRERGG) shows a compositional bias: basic and acidic residues. 14 C2H2-type zinc fingers span residues 110–132 (WKCG…QRIH), 138–160 (FACP…QRTH), 166–188 (YACH…WRTH), 194–216 (HRCA…RRVH), 222–244 (YACA…QRIH), 250–272 (YECS…QRIH), 278–300 (YRCG…RRVH), 306–328 (YTCQ…RRIH), 334–356 (YACG…QRTH), 362–384 (YPCH…RLVH), 390–412 (YRCL…QKIH), 418–440 (YKCG…QRTH), 446–468 (YTCP…HIVH), and 474–496 (YECS…QRTH). The disordered stretch occupies residues 497–537 (ADSSGRLCPAPTPDSTPGLSQGGETCQQGCPGRNPRGPAED). Polar residues predominate over residues 509 to 524 (PDSTPGLSQGGETCQQ).

The protein belongs to the krueppel C2H2-type zinc-finger protein family.

The protein localises to the nucleus. May be involved in transcriptional regulation. The chain is Zinc finger protein 835 (ZNF835) from Homo sapiens (Human).